Consider the following 126-residue polypeptide: Large ribosomal subunit protein bL12 (126 aa).

The protein belongs to the bacterial ribosomal protein bL12 family. In terms of assembly, homodimer. Part of the ribosomal stalk of the 50S ribosomal subunit. Forms a multimeric L10(L12)X complex, where L10 forms an elongated spine to which 2 to 4 L12 dimers bind in a sequential fashion. Binds GTP-bound translation factors.

Forms part of the ribosomal stalk which helps the ribosome interact with GTP-bound translation factors. Is thus essential for accurate translation. This is Large ribosomal subunit protein bL12 from Saccharophagus degradans (strain 2-40 / ATCC 43961 / DSM 17024).